Consider the following 497-residue polypeptide: Probable cytosol aminopeptidase (497 aa).

Residues K267 and D272 each contribute to the Mn(2+) site. K279 is an active-site residue. Residues D290, D349, and E351 each contribute to the Mn(2+) site. The active site involves R353.

Belongs to the peptidase M17 family. The cofactor is Mn(2+).

It localises to the cytoplasm. It carries out the reaction Release of an N-terminal amino acid, Xaa-|-Yaa-, in which Xaa is preferably Leu, but may be other amino acids including Pro although not Arg or Lys, and Yaa may be Pro. Amino acid amides and methyl esters are also readily hydrolyzed, but rates on arylamides are exceedingly low.. The catalysed reaction is Release of an N-terminal amino acid, preferentially leucine, but not glutamic or aspartic acids.. Functionally, presumably involved in the processing and regular turnover of intracellular proteins. Catalyzes the removal of unsubstituted N-terminal amino acids from various peptides. The protein is Probable cytosol aminopeptidase of Nitrosomonas europaea (strain ATCC 19718 / CIP 103999 / KCTC 2705 / NBRC 14298).